The primary structure comprises 1137 residues: Protein sel-1 homolog 3 (1137 aa).

Residues 1 to 42 (MQWRGAGLWWPRRRQQQQQQQPPPPAFGPPAAAMVPPSRGVS) form a disordered region. N-linked (GlcNAc...) asparagine glycosylation is found at Asn-206 and Asn-387. Sel1-like repeat units lie at residues 575–609 (HKASYYLTVFYETGLNGPRDQLQGMLYSLVGGQGS), 611–647 (RLSSMNLGYKHYQGVDSYPLDWELSYAYYSNIATKTP), 694–730 (AAAQQRLAQMLFWGQQGVAKNPEAAIEWYAKGALETE), 732–767 (PALIYDYAIVLFKGQGVKKNRRLALELMKKAASKGL), 768–800 (HQAVNGLGWYYHKFRKNYAKAAKYWLKAEEMGN), 801–839 (PDASYNLGVLYLDGIFPGVPGRNLTLAGEYFHKAAQGGH), and 840–877 (IEGTLWCSLYYITGNLETFPRDPEKAVVWAKHVAEKNG). At Ser-613 the chain carries Phosphoserine. Residue Asn-942 is glycosylated (N-linked (GlcNAc...) asparagine). A Sel1-like 8 repeat occupies 952–988 (SFAYLKMGDLYYYGHQNQSQDLELSVQMYAQAALDGD). Residues 1067-1087 (LIYFLGTFLLSVVIAWMVLYL) traverse the membrane as a helical segment. The tract at residues 1100–1137 (AWVSADPTSSTPSPAVPPAADASDHDPPMMANGPEPRG) is disordered. Residues 1102–1120 (VSADPTSSTPSPAVPPAAD) are compositionally biased toward low complexity.

The protein resides in the membrane. The protein is Protein sel-1 homolog 3 (Sel1l3) of Mus musculus (Mouse).